The chain runs to 2670 residues: Inositol 1,4,5-trisphosphate-gated calcium channel ITPR3 (2670 aa).

Residues M1–L2233 are Cytoplasmic-facing. 5 consecutive MIR domains span residues G113–N173, G174–F224, E232–V288, G295–T372, and D378–V434. 1D-myo-inositol 1,4,5-trisphosphate is bound by residues R266, L269, and R270. Residues R503, K507, R510, Y567, R568, and K569 each coordinate 1D-myo-inositol 1,4,5-trisphosphate. R743 is a binding site for Ca(2+). 2 positions are modified to phosphoserine: S916 and S934. Ca(2+)-binding residues include E1122 and E1125. The segment covering E1138 to D1153 has biased composition (basic and acidic residues). 2 disordered regions span residues E1138–K1164 and N1807–M1835. Residues S1813, S1832, and S1834 each carry the phosphoserine modification. Ca(2+)-binding residues include E1881 and E1945. The ATP site is built by A1995, E2148, and K2151. The helical transmembrane segment at G2234–F2254 threads the bilayer. Residues T2255–P2262 are Extracellular-facing. Residues L2263 to I2283 traverse the membrane as a helical segment. At L2284 to K2292 the chain is on the cytoplasmic side. The helical transmembrane segment at I2293–Y2310 threads the bilayer. Residues K2311–G2324 lie on the Extracellular side of the membrane. A helical membrane pass occupies residues Y2325–F2345. Residues D2346–S2367 are Cytoplasmic-facing. Residues I2368–L2388 traverse the membrane as a helical segment. Residues F2389–Y2495 lie on the Extracellular side of the membrane. C2454 and C2460 form a disulfide bridge. The helical transmembrane segment at D2496–I2516 threads the bilayer. Residues D2517–R2670 are Cytoplasmic-facing. ATP is bound by residues C2537 and F2538. A Zn(2+)-binding site is contributed by C2537. Positions 2540 and 2557 each coordinate Zn(2+). ATP is bound by residues K2559, H2562, N2563, and M2564. Residue H2562 coordinates Zn(2+). T2580 contacts Ca(2+). 2 positions are modified to phosphoserine: S2608 and S2669.

Belongs to the InsP3 receptor family. Homodimer. Homotetramer. Interacts with TRPC1, TRPC3, TRPC4. Interacts with TRPV4. Interacts with SIGMAR1. Found in a complex with AKT1 and PML; this interaction modulates IP3R3-phosphorylation and in turn ITPR3-dependent calcium release. Interacts with IRAG2 (via coiled-coil domain). Interacts with CABP1. Interacts with TMBIM4/LFG4. Interacts with CEMIP. Interacts with TESPA1. Interacts with TMEM203. Interacts with BOK; regulates ITPR3 expression. Interacts with BCL2L10. Interacts with CHGA and CHGB. In terms of processing, phosphorylated by AKT1 on serine and/or threonine residues.

The protein localises to the endoplasmic reticulum membrane. The protein resides in the cytoplasmic vesicle. It localises to the secretory vesicle membrane. The catalysed reaction is Ca(2+)(in) = Ca(2+)(out). Inositol 1,4,5-trisphosphate-gated calcium channel is regulated by cytosolic calcium in a biphasic manner. At low concentrations, cytosolic calcium binds at a high-affinity juxtamembrane domain (JD) calcium binding site, allowing ITPR3 to activate by escaping a low-energy resting state through an ensemble of preactivated states. At high cytosolic calcium concentrations, ITPR3 preferentially enters an inhibited state stabilized by calcium binding at a second, low-affinity cytoplasmic domain (CD) calcium binding site. Functionally, inositol 1,4,5-trisphosphate-gated calcium channel that, upon 1D-myo-inositol 1,4,5-trisphosphate binding, transports calcium from the endoplasmic reticulum lumen to cytoplasm, thus releasing the intracellular calcium and therefore participates in cellular calcium ion homeostasis. 1D-myo-inositol 1,4,5-trisphosphate binds to the ligand-free channel without altering its global conformation, yielding the low-energy resting state, then progresses through resting-to preactivated transitions to the higher energy preactivated state, which increases affinity for calcium, promoting binding of the low basal cytosolic calcium at the juxtamembrane domain (JD) site, favoring the transition through the ensemble of high-energy intermediate states along the trajectory to the fully-open activated state. Upon opening, releases calcium in the cytosol where it can bind to the low-affinity cytoplasmic domain (CD) site and stabilizes the inhibited state to terminate calcium release. This is Inositol 1,4,5-trisphosphate-gated calcium channel ITPR3 from Mus musculus (Mouse).